The following is a 1235-amino-acid chain: STE20-like serine/threonine-protein kinase (1235 aa).

Position 14 is a phosphoserine (Ser14). Residues 34–292 (WEIIGELGDG…TSQLLQHPFV (259 aa)) form the Protein kinase domain. Residues 40-48 (LGDGAFGKV) and Lys63 each bind ATP. Asp155 serves as the catalytic Proton acceptor. Thr183 carries the phosphothreonine modification. The residue at position 189 (Ser189) is a Phosphoserine. The interval 309–351 (AEVTEEVEDGKEEDEEEETENSLPIPASKRASSDLSIASSEED) is disordered. A compositionally biased stretch (acidic residues) spans 312–328 (TEEVEDGKEEDEEEETE). Residues Ser330, Ser340, Ser341, Ser344, Ser347, Ser348, Ser354, and Ser372 each carry the phosphoserine modification. 2 disordered regions span residues 363-393 (VSEK…PEKA) and 421-441 (ENER…DQET). Residues 421 to 432 (ENEREKRPKLEN) are compositionally biased toward basic and acidic residues. Position 518 is a phosphoserine (Ser518). The disordered stretch occupies residues 519 to 539 (EVGLTKEDTQEKLGEDDKTQK). Residues 522–539 (LTKEDTQEKLGEDDKTQK) show a composition bias toward basic and acidic residues. The residue at position 565 (Ser565) is a Phosphoserine. A Phosphothreonine modification is found at Thr569. Ser571, Ser647, Ser655, and Ser667 each carry phosphoserine. A disordered region spans residues 613-760 (EGKNKEQAIN…GTGSTADTSS (148 aa)). A compositionally biased stretch (acidic residues) spans 638-650 (EGEEITESSSTEE). The segment covering 679 to 695 (IDKEKKEIPVSIKKEPE) has biased composition (basic and acidic residues). Low complexity predominate over residues 749-760 (DSGTGSTADTSS). Residues Ser777 and Ser779 each carry the phosphoserine modification. Phosphothreonine is present on Thr814. At Ser818 the chain carries Phosphoserine. Residues 826–1069 (LRRQELRELR…LKNRQTQERA (244 aa)) adopt a coiled-coil conformation. The UVR domain maps to 875–910 (DQEIENLEKQQKQTIERLEQEHTNRLRDEAKRIKGE). Thr1097 is modified (phosphothreonine). The stretch at 1109–1183 (AAQEEKRQKN…ELKEWREKLR (75 aa)) forms a coiled coil.

Belongs to the protein kinase superfamily. STE Ser/Thr protein kinase family. STE20 subfamily. Proteolytically cleaved by caspase-3. In terms of processing, autophosphorylated. In terms of tissue distribution, ubiquitously expressed. Highest expression is found in heart and in skeletal muscle.

It localises to the cytoplasm. It carries out the reaction L-seryl-[protein] + ATP = O-phospho-L-seryl-[protein] + ADP + H(+). The catalysed reaction is L-threonyl-[protein] + ATP = O-phospho-L-threonyl-[protein] + ADP + H(+). Functionally, mediates apoptosis and actin stress fiber dissolution. In Homo sapiens (Human), this protein is STE20-like serine/threonine-protein kinase (SLK).